The following is a 435-amino-acid chain: Cytochrome c oxidase subunit 3 (435 aa).

The next 7 membrane-spanning stretches (helical) occupy residues 70 to 90, 96 to 116, 132 to 152, 176 to 196, 325 to 345, 360 to 380, and 412 to 432; these read VAPLAVTLPLGFFVLNYFGVI, LLIALSSFIGGLVIWTISIIF, LVMGMMMFIISEVMFFFSFFW, VYSYMGLPLLNTVLLLLSGAI, LYFTLLCAVVFLACQGYEYFF, FLLTGFHGFHVLVGSILIGII, and LFYWHFVDIVWIFLYIVIYWW.

This sequence belongs to the cytochrome c oxidase subunit 3 family. In terms of assembly, component of the cytochrome c oxidase (complex IV, CIV), a multisubunit enzyme composed of a catalytic core of 3 subunits and several supernumerary subunits. The complex exists as a monomer or a dimer and forms supercomplexes (SCs) in the inner mitochondrial membrane with ubiquinol-cytochrome c oxidoreductase (cytochrome b-c1 complex, complex III, CIII).

The protein resides in the mitochondrion inner membrane. It carries out the reaction 4 Fe(II)-[cytochrome c] + O2 + 8 H(+)(in) = 4 Fe(III)-[cytochrome c] + 2 H2O + 4 H(+)(out). Component of the cytochrome c oxidase, the last enzyme in the mitochondrial electron transport chain which drives oxidative phosphorylation. The respiratory chain contains 3 multisubunit complexes succinate dehydrogenase (complex II, CII), ubiquinol-cytochrome c oxidoreductase (cytochrome b-c1 complex, complex III, CIII) and cytochrome c oxidase (complex IV, CIV), that cooperate to transfer electrons derived from NADH and succinate to molecular oxygen, creating an electrochemical gradient over the inner membrane that drives transmembrane transport and the ATP synthase. Cytochrome c oxidase is the component of the respiratory chain that catalyzes the reduction of oxygen to water. Electrons originating from reduced cytochrome c in the intermembrane space (IMS) are transferred via the dinuclear copper A center (CU(A)) of subunit 2 and heme A of subunit 1 to the active site in subunit 1, a binuclear center (BNC) formed by heme A3 and copper B (CU(B)). The BNC reduces molecular oxygen to 2 water molecules using 4 electrons from cytochrome c in the IMS and 4 protons from the mitochondrial matrix. This chain is Cytochrome c oxidase subunit 3 (cox3), found in Dictyostelium discoideum (Social amoeba).